A 60-amino-acid polypeptide reads, in one-letter code: Large ribosomal subunit protein bL32 (60 aa).

Residues Met-1–Gln-23 form a disordered region.

This sequence belongs to the bacterial ribosomal protein bL32 family.

In Chlamydia abortus (strain DSM 27085 / S26/3) (Chlamydophila abortus), this protein is Large ribosomal subunit protein bL32.